The sequence spans 308 residues: Alternaria stem canker resistance protein 1 (308 aa).

The next 6 membrane-spanning stretches (helical) occupy residues 21–41, 82–102, 128–148, 165–185, 213–233, and 254–274; these read YQDL…RFIL, FVYF…EPWF, LLYM…LYWE, VSLI…VVLA, FSLF…FWII, and IILY…HLFW. The region spanning 73 to 287 is the TLC domain; sequence NKFKESAWKF…ILRMVKNQIL (215 aa).

It localises to the endoplasmic reticulum membrane. In terms of biological role, mediates resistance to sphinganine-analog mycotoxins (SAMs) by restoring the sphingolipid biosynthesis. Could salvage the transport of GPI-anchored proteins from the endoplasmic reticulum to the Golgi apparatus in ceramides-depleted cells after SAM exposure. This Solanum lycopersicum (Tomato) protein is Alternaria stem canker resistance protein 1.